A 336-amino-acid polypeptide reads, in one-letter code: Protein-arginine kinase (336 aa).

One can recognise a Phosphagen kinase C-terminal domain in the interval 22–245 (IVMSSRIRLA…QQIINEEMQI (224 aa)). ATP contacts are provided by residues 25 to 29 (SSRIR), His83, Arg116, 167 to 171 (RASVM), and 198 to 203 (RGIYGE).

This sequence belongs to the ATP:guanido phosphotransferase family.

It carries out the reaction L-arginyl-[protein] + ATP = N(omega)-phospho-L-arginyl-[protein] + ADP + H(+). Catalyzes the specific phosphorylation of arginine residues in proteins. This chain is Protein-arginine kinase, found in Staphylococcus saprophyticus subsp. saprophyticus (strain ATCC 15305 / DSM 20229 / NCIMB 8711 / NCTC 7292 / S-41).